The chain runs to 317 residues: NADH kinase (317 aa).

This sequence belongs to the NAD kinase family. In terms of assembly, homodimer. As to expression, ubiquitous.

The protein resides in the cytoplasm. It carries out the reaction NADH + ATP = ADP + NADPH + H(+). With respect to regulation, two-fold decrease in activity in the presence of PPi, iodoacetate or para-chloromercuribenzoate. Phosphorylates specifically NADH. Can phosphorylate NAD with a 100-fold decrease in efficiency compared to NADH. Prefers ATP as nucleoside triphosphate substrate. Can also utilize UTP, GTP and CTP. Key source of the cellular reductant NADPH which is an important antioxidant factor. In Arabidopsis thaliana (Mouse-ear cress), this protein is NADH kinase (NADK3).